A 452-amino-acid chain; its full sequence is Protein mab-21-like 4 (452 aa).

The chain is Protein mab-21-like 4 (Mab21l4) from Mus musculus (Mouse).